The chain runs to 316 residues: MTRFQSDAAVSADRGHLMTEQPNPRSTALDLLDTAELVTLFVEEDRRPQQAVADASASISAAVDRIASRLKDGGRLFYLGAGTSGRLGVLDAAECPPTFCSDPEMVQGVLAGGAPALLRSSEGLEDLEAAGREDLDQRGFNAGDCLVGIAAGGTTPYVRGGLSHARSIGALAIAMACVPSDQAPLPCDIDIRLLTGPELLTGSTRLKAGTATKMALNIISTAVMVRLGKVFGNRMVDVSASNSKLVDRCLRILRDLGGIERDDGLVLLDQAGGSVKLALLMASSGLASSEAMELLQTHDGQLRQAFASRGLKLAQS.

The tract at residues 1-24 (MTRFQSDAAVSADRGHLMTEQPNP) is disordered. The 164-residue stretch at 66–229 (IASRLKDGGR…STAVMVRLGK (164 aa)) folds into the SIS domain. E94 acts as the Proton donor in catalysis. E125 is an active-site residue.

Belongs to the GCKR-like family. MurNAc-6-P etherase subfamily. Homodimer.

It catalyses the reaction N-acetyl-D-muramate 6-phosphate + H2O = N-acetyl-D-glucosamine 6-phosphate + (R)-lactate. The protein operates within amino-sugar metabolism; N-acetylmuramate degradation. In terms of biological role, specifically catalyzes the cleavage of the D-lactyl ether substituent of MurNAc 6-phosphate, producing GlcNAc 6-phosphate and D-lactate. The chain is N-acetylmuramic acid 6-phosphate etherase from Parasynechococcus marenigrum (strain WH8102).